A 168-amino-acid chain; its full sequence is Photosystem I assembly protein Ycf3 (168 aa).

TPR repeat units lie at residues 35–68, 72–105, and 120–153; these read AFTY…EIDP, SYIL…NPFL, and GEQA…TPGN.

The protein belongs to the Ycf3 family.

The protein resides in the plastid. It is found in the chloroplast thylakoid membrane. In terms of biological role, essential for the assembly of the photosystem I (PSI) complex. May act as a chaperone-like factor to guide the assembly of the PSI subunits. The sequence is that of Photosystem I assembly protein Ycf3 from Phalaenopsis aphrodite subsp. formosana (Moth orchid).